We begin with the raw amino-acid sequence, 554 residues long: Solute carrier family 22 member 1 (554 aa).

Topologically, residues 1–21 (MPTVDDVLEQVGEFGWFQKRT) are cytoplasmic. A helical membrane pass occupies residues 22–42 (FLFLCLISAILAPIYLGIVFL). Residues 43 to 149 (GFTPDHRCRS…LVCADAWKVD (107 aa)) lie on the Extracellular side of the membrane. Asn71 is a glycosylation site (N-linked (GlcNAc...) asparagine). The helical transmembrane segment at 150–170 (LFQSCVNLGFFLGSLGVGYIA) threads the bilayer. The Cytoplasmic portion of the chain corresponds to 171–176 (DRFGRK). Residues 177–197 (LCLLLTTLINAVSGVLTAVAP) form a helical membrane-spanning segment. Topologically, residues 198-206 (DYTSMLLFR) are extracellular. The helical transmembrane segment at 207–229 (LLQGLVSKGSWMSGYTLITEFVG) threads the bilayer. Over 230–237 (SGYRRTVA) the chain is Cytoplasmic. The chain crosses the membrane as a helical span at residues 238 to 258 (ILYQVAFSVGLVALSGVAYAI). Residues 259–262 (PNWR) are Extracellular-facing. The helical transmembrane segment at 263–283 (WLQLTVSLPTFLCLFYYWCVP) threads the bilayer. Positions 283–287 (PESPR) match the Proline-rich sequence motif. Topologically, residues 284 to 347 (ESPRWLLSQK…FRTPNLRKHT (64 aa)) are cytoplasmic. The residue at position 333 (Ser333) is a Phosphoserine. The chain crosses the membrane as a helical span at residues 348–368 (FILMFLWFTCSVLYQGLILHM). The Extracellular segment spans residues 369–374 (GATGGN). A helical membrane pass occupies residues 375-395 (VYLDFFYSSLVEFPAAFVILV). The Cytoplasmic portion of the chain corresponds to 396 to 402 (TIDRVGR). A helical membrane pass occupies residues 403–423 (IYPMAASNLAAGVASVILIFV). At 424-431 (PQDLHWLT) the chain is on the extracellular side. A helical transmembrane segment spans residues 432–452 (IVLSCVGRMGATIVLQMICLV). The Cytoplasmic portion of the chain corresponds to 453–464 (NAELYPTFVRNL). The chain crosses the membrane as a helical span at residues 465–485 (GVMVCSALCDVGGIITPFMVF). The Extracellular segment spans residues 486 to 492 (RLMEVWQ). A helical membrane pass occupies residues 493–513 (PLPLIVFGVLGLLAGGMTLLL). The Cytoplasmic portion of the chain corresponds to 514 to 554 (PETKGVALPETIEDAENLRRKAKPKESKIYLQVQTSELKGP).

The protein belongs to the major facilitator (TC 2.A.1) superfamily. Organic cation transporter (TC 2.A.1.19) family. Phosphorylated. In terms of tissue distribution, expressed in kidney, liver and intestine.

It localises to the basolateral cell membrane. Its subcellular location is the apical cell membrane. It is found in the lateral cell membrane. The protein resides in the basal cell membrane. It catalyses the reaction 1-methylnicotinamide(out) = 1-methylnicotinamide(in). The catalysed reaction is dopamine(out) = dopamine(in). It carries out the reaction serotonin(out) = serotonin(in). The enzyme catalyses (R)-adrenaline(out) = (R)-adrenaline(in). It catalyses the reaction (R)-noradrenaline(out) = (R)-noradrenaline(in). The catalysed reaction is histamine(out) = histamine(in). It carries out the reaction guanidine(out) = guanidine(in). The enzyme catalyses choline(out) = choline(in). It catalyses the reaction acetylcholine(in) = acetylcholine(out). The catalysed reaction is thiamine(in) = thiamine(out). It carries out the reaction spermidine(in) = spermidine(out). The enzyme catalyses agmatine(out) = agmatine(in). It catalyses the reaction putrescine(out) = putrescine(in). The catalysed reaction is (R)-carnitine(in) = (R)-carnitine(out). It carries out the reaction O-isobutanoyl-(R)-carnitine(in) = O-isobutanoyl-(R)-carnitine(out). The enzyme catalyses O-acetyl-(R)-carnitine(in) = O-acetyl-(R)-carnitine(out). It catalyses the reaction O-3-hydroxybutanoyl-(R)-carnitine(in) = O-3-hydroxybutanoyl-(R)-carnitine(out). The catalysed reaction is O-propanoyl-(R)-carnitine(in) = O-propanoyl-(R)-carnitine(out). It carries out the reaction O-butanoyl-(R)-carnitine(in) = O-butanoyl-(R)-carnitine(out). The enzyme catalyses O-2-methylbutanoyl-(R)-carnitine(in) = O-2-methylbutanoyl-(R)-carnitine(out). It catalyses the reaction O-3-methylbutanoyl-(R)-carnitine(in) = O-3-methylbutanoyl-(R)-carnitine(out). The catalysed reaction is O-hexanoyl-(R)-carnitine(in) = O-hexanoyl-(R)-carnitine(out). It carries out the reaction L-histidyl-L-proline diketopiperazine(in) = L-histidyl-L-proline diketopiperazine(out). The enzyme catalyses (R)-salsolinol(in) = (R)-salsolinol(out). It catalyses the reaction prostaglandin F2alpha(out) = prostaglandin F2alpha(in). The catalysed reaction is prostaglandin E2(out) = prostaglandin E2(in). With respect to regulation, phosphorylation of the transporter leads to changes in its substrate affinity, resulting in a regulation of the transport activity. In contrast with rat ortholog, ASP uptake is inhibited by protein kinase A (PKA) and C (PKC) activation. ASP uptake is also endogenously activated by calmodulin, the calmodulin-dependent kinase II and LCK tyrosine kinase. Inhibited by cGMP, most likely through a cGMP-binding protein that interacts with OCT1. In terms of biological role, electrogenic voltage-dependent transporter that mediates the transport of a variety of organic cations such as endogenous bioactive amines, cationic drugs and xenobiotics. Functions as a pH- and Na(+)-independent, bidirectional transporter. Cation cellular uptake or release is driven by the electrochemical potential (i.e. membrane potential and concentration gradient) and substrate selectivity. Hydrophobicity is a major requirement for recognition in polyvalent substrates and inhibitors. Primarily expressed in the basolateral membrane of hepatocytes and proximal tubules and involved in the uptake and disposition of cationic compounds from the blood by hepatic and renal clearance. Most likely functions as an uptake carrier in enterocytes contributing to the intestinal elimination of organic cations from the systemic circulation. Transports endogenous monoamines such as N-1-methylnicotinamide (NMN), guanidine, neurotransmitters dopamine, serotonin, noradrenaline, adrenaline and histamine, and quaternary ammonium compound such as choline. Also transports natural polyamines such as spermidine, agmatine and putrescine at low affinity, but relatively high turnover. Involved in the hepatic and intestinal uptake of the vitamin B1/thiamine, hence regulating hepatic lipid and energy metabolism. Contributes to the influx and efflux of fatty acid carriers carnitines and acylcarnitines across the basolateral membrane of hepatocytes, from the liver to the systemic circulation and inversely and may be involved in regulating the systemic availability of hepatic acylcarnitines. Also capable of transporting non-amine endogenous compounds such as prostaglandin E2 (PGE2) and prostaglandin F2-alpha (PGF2-alpha). May contribute to the transport of cationic compounds in testes across the blood-testis-barrier. Also mediates the uptake of xenobiotics tributylmethylammonium (TBuMA), quinidine, N-methyl-quinine (NMQ), N-methyl-quinidine (NMQD) N-(4,4-azo-n-pentyl)-quinuclidine (APQ), azidoprocainamide methoiodide (AMP), N-(4,4-azo-n-pentyl)-21-deoxyajmalinium (APDA) and 4-(4-(dimethylamino)styryl)-N-methylpyridinium (ASP). The sequence is that of Solute carrier family 22 member 1 (SLC22A1) from Oryctolagus cuniculus (Rabbit).